The chain runs to 449 residues: Exodeoxyribonuclease 7 large subunit (449 aa).

The protein belongs to the XseA family. As to quaternary structure, heterooligomer composed of large and small subunits.

It is found in the cytoplasm. The catalysed reaction is Exonucleolytic cleavage in either 5'- to 3'- or 3'- to 5'-direction to yield nucleoside 5'-phosphates.. Its function is as follows. Bidirectionally degrades single-stranded DNA into large acid-insoluble oligonucleotides, which are then degraded further into small acid-soluble oligonucleotides. The polypeptide is Exodeoxyribonuclease 7 large subunit (Salmonella dublin (strain CT_02021853)).